The primary structure comprises 192 residues: Visinin (192 aa).

Gly2 carries the N-myristoyl glycine lipid modification. EF-hand domains are found at residues 24-59, 61-96, 97-132, and 146-181; these read TEEE…FFPN, EPQG…TSSG, KTHL…IFKM, and NSPQ…KNDA. Ca(2+)-binding residues include Asp74, Asn76, Asp78, Thr80, Glu85, Asp110, Asp112, Asn114, Glu116, Glu121, Asn164, Lys166, and Glu171.

It belongs to the recoverin family. Retinal cell specific protein.

Its function is as follows. Seems to be implicated in the pathway from retinal rod guanylate cyclase to rhodopsin. May be involved in the blocking of the phosphorylation of rhodopsin. This Gallus gallus (Chicken) protein is Visinin.